A 395-amino-acid polypeptide reads, in one-letter code: MTEPANNHPSPPPQNWLFKWWNSLNAITRLLVLVLGAPLMVLNARALSSIFGYFESLFVISLIASVIAFLLNYPVAWLEKQGAKRFVAASFVFLTALIIFTALGVTLIPLALSQAQQLVARLPDWLDSGQKQLVLLDQKAEILGWPVNFDGLIPQINSRLAAELQNLAGSTLNLALSLTVFTVVRLLDVLLTIILTFYLLLHTDDVWQSIIGWLPERFQKPFSDTLRRSFQNYFLGQLVSATCMALGLISGFLLLKVPFGLLFGLTVGVMALIPFGGSVGIVLVTFLVALRDIGMALQLLAVALVIQQIVENGIAPRVLGSVTGLNPFWVLISLLTGARIGGLLGVIVAVPSAVMIKEALGAIRSMKPLVPAPDHNQDPLYFKNQEEVQPLPPRP.

8 helical membrane-spanning segments follow: residues 24–44 (LNAI…VLNA), 50–70 (IFGY…IAFL), 91–111 (FVFL…IPLA), 180–200 (VFTV…FYLL), 245–265 (ALGL…LFGL), 269–289 (VMAL…FLVA), 295–315 (MALQ…NGIA), and 328–348 (FWVL…GVIV).

Belongs to the autoinducer-2 exporter (AI-2E) (TC 2.A.86) family.

The protein resides in the cell membrane. This is Putative transport protein sll0063 from Synechocystis sp. (strain ATCC 27184 / PCC 6803 / Kazusa).